Reading from the N-terminus, the 427-residue chain is Enolase (427 aa).

Gln163 is a (2R)-2-phosphoglycerate binding site. Catalysis depends on Glu205, which acts as the Proton donor. Mg(2+) is bound by residues Asp242, Glu285, and Asp312. (2R)-2-phosphoglycerate is bound by residues Lys337, Arg366, Ser367, and Lys388. Lys337 acts as the Proton acceptor in catalysis.

Belongs to the enolase family. It depends on Mg(2+) as a cofactor.

It is found in the cytoplasm. It localises to the secreted. Its subcellular location is the cell surface. The catalysed reaction is (2R)-2-phosphoglycerate = phosphoenolpyruvate + H2O. Its pathway is carbohydrate degradation; glycolysis; pyruvate from D-glyceraldehyde 3-phosphate: step 4/5. Functionally, catalyzes the reversible conversion of 2-phosphoglycerate (2-PG) into phosphoenolpyruvate (PEP). It is essential for the degradation of carbohydrates via glycolysis. The polypeptide is Enolase (Burkholderia lata (strain ATCC 17760 / DSM 23089 / LMG 22485 / NCIMB 9086 / R18194 / 383)).